The primary structure comprises 124 residues: Fluoride-specific ion channel FluC (124 aa).

Transmembrane regions (helical) follow at residues 5 to 25 (ILAVSAAGIAGTLLRFAAGTW), 38 to 58 (TLAVNLVGCLIIGLLYGWFLL), 69 to 89 (GLIVGFVGGLTTFSSFSLDTL), and 97 to 117 (ALIAFGYLGISVFGGLLATWA). 2 residues coordinate Na(+): G76 and T79.

Belongs to the fluoride channel Fluc/FEX (TC 1.A.43) family.

It is found in the cell inner membrane. It catalyses the reaction fluoride(in) = fluoride(out). Its activity is regulated as follows. Na(+) is not transported, but it plays an essential structural role and its presence is essential for fluoride channel function. Its function is as follows. Fluoride-specific ion channel. Important for reducing fluoride concentration in the cell, thus reducing its toxicity. This chain is Fluoride-specific ion channel FluC, found in Pseudomonas fluorescens (strain SBW25).